We begin with the raw amino-acid sequence, 416 residues long: Major facilitator superfamily domain-containing protein 3 (416 aa).

A run of 12 helical transmembrane segments spans residues 10–30 (GLYLVQGLPYGLQSSLLPILL), 40–60 (VGLTKGLYAPWLLKLAWAPLV), 68–88 (VWLTFSTVCLGLVCGLLAVLP), 99–119 (TTVMGLLLLLNLGAAVQDVAL), 139–158 (QVVAYKLGSALAGGGLLVFF), 170–190 (LTATYWLAAALAWAAPALGRL), 204–224 (YLLQDLLAVPGTLWTAGFVLT), 252–272 (LWSGLGAATCSIAGSSLGGAL), 295–315 (LGGLACQTALLLHLNTPGASL), 324–344 (AALLSLCLQQFLGGVVTTATF), 365–385 (FLATLELLGKLLPGTLAGVLA), and 392–412 (LCFAAFLVLSALPVLDLRLAP).

Belongs to the major facilitator superfamily.

The protein resides in the membrane. The protein is Major facilitator superfamily domain-containing protein 3 (Mfsd3) of Rattus norvegicus (Rat).